Consider the following 235-residue polypeptide: Phosphoribosylaminoimidazole-succinocarboxamide synthase (235 aa).

The protein belongs to the SAICAR synthetase family.

It catalyses the reaction 5-amino-1-(5-phospho-D-ribosyl)imidazole-4-carboxylate + L-aspartate + ATP = (2S)-2-[5-amino-1-(5-phospho-beta-D-ribosyl)imidazole-4-carboxamido]succinate + ADP + phosphate + 2 H(+). It functions in the pathway purine metabolism; IMP biosynthesis via de novo pathway; 5-amino-1-(5-phospho-D-ribosyl)imidazole-4-carboxamide from 5-amino-1-(5-phospho-D-ribosyl)imidazole-4-carboxylate: step 1/2. This Nautilia profundicola (strain ATCC BAA-1463 / DSM 18972 / AmH) protein is Phosphoribosylaminoimidazole-succinocarboxamide synthase.